Here is a 344-residue protein sequence, read N- to C-terminus: Chalcone synthase A (344 aa).

The active site involves Cys-167.

This sequence belongs to the thiolase-like superfamily. Chalcone/stilbene synthases family.

The enzyme catalyses (E)-4-coumaroyl-CoA + 3 malonyl-CoA + 3 H(+) = 2',4,4',6'-tetrahydroxychalcone + 3 CO2 + 4 CoA. It participates in secondary metabolite biosynthesis; flavonoid biosynthesis. The primary product of this enzyme is 4,2',4',6'-tetrahydroxychalcone (also termed naringenin-chalcone or chalcone) which can under specific conditions spontaneously isomerize into naringenin. This is Chalcone synthase A (CHSA) from Ipomoea nil (Japanese morning glory).